The primary structure comprises 510 residues: Ent-sandaracopimaradiene 3-hydroxylase (510 aa).

The chain crosses the membrane as a helical span at residues 4–24; sequence MLVAGAGAAAVAAVGGLVAAA. Cys-454 lines the heme pocket.

Belongs to the cytochrome P450 family. Interacts with the rice dwarf virus (RDV) P2 protein. Heme serves as cofactor. In terms of tissue distribution, expressed in leaf blades and sheaths, stems and panicles.

It localises to the membrane. It carries out the reaction ent-sandaracopimara-8(14),15-diene + reduced [NADPH--hemoprotein reductase] + O2 = ent-sandaracopimaradien-3beta-ol + oxidized [NADPH--hemoprotein reductase] + H2O + H(+). The catalysed reaction is 9beta-pimara-7,15-diene + reduced [NADPH--hemoprotein reductase] + O2 = 9beta-pimara-7,15-diene-3beta-ol + oxidized [NADPH--hemoprotein reductase] + H2O + H(+). Catalyzes the hydroxylation of ent-sandaracopimaradiene at the C3alpha position to produce ent-3beta-hydroxy-sandaracopimaradiene, an intermediates for the biosynthesis of oryzalexin D and oryzalexin E phytoalexins. Catalyzes the hydroxylation of ent-cassadiene at the C3alpha position to produce 3alpha-hydroxy-ent-cassadiene, which may be an intermediate for the biosynthesis of phytocassane phytoalexins. Catalyzes the hydroxylation of syn-pimaradiene (9-beta-pimara-7,15-diene) at the C3beta position to produce 3-beta-syn-pimaradiene. Can hydroxylate ent-kaurene in vitro, but the product is not ent-kauren-19-ol as expected for ent-kaurene oxidase activity. This chain is Ent-sandaracopimaradiene 3-hydroxylase, found in Oryza sativa subsp. japonica (Rice).